The primary structure comprises 557 residues: Formate--tetrahydrofolate ligase (557 aa).

Residue threonine 65–threonine 72 participates in ATP binding.

The protein belongs to the formate--tetrahydrofolate ligase family.

The enzyme catalyses (6S)-5,6,7,8-tetrahydrofolate + formate + ATP = (6R)-10-formyltetrahydrofolate + ADP + phosphate. It participates in one-carbon metabolism; tetrahydrofolate interconversion. The polypeptide is Formate--tetrahydrofolate ligase (Methylorubrum extorquens (strain CM4 / NCIMB 13688) (Methylobacterium extorquens)).